A 327-amino-acid chain; its full sequence is MDNVFDYEDIQLIPAKCIVESRSECDTSVTLGGHTFKLPVVPANMQTIIDETLAKKLAENGYFYIMHRFQPEARVNFIQDMHGSGLIASISVGVKEEEYAFIEELAATNLVPEFITIDIAHGHSNAVIRMIQHIKKHLPNSFVIAGNVGTPEAVRELENAGADATKVGIGPGKVCITKIKTGFGTGGWQLAALRWCAKAATKPIIADGGIRTHGDIAKSVRFGASMVMIGSLFAGHEESPGQTIEVEGKKVKEYFGSASEFQKGERKNVEGKKMFVEHKGSIKDTLIEMQQDLQSSISYAGGTKLDAIRNVDYVIVKNSIFNGDKVY.

Cysteine 175 (thioimidate intermediate) is an active-site residue. 204–227 is a binding site for NADP(+); it reads IIADGGIRTHGDIAKSVRFGASMV.

This sequence belongs to the IMPDH/GMPR family. GuaC type 2 subfamily.

It catalyses the reaction IMP + NH4(+) + NADP(+) = GMP + NADPH + 2 H(+). Its function is as follows. Catalyzes the irreversible NADPH-dependent deamination of GMP to IMP. It functions in the conversion of nucleobase, nucleoside and nucleotide derivatives of G to A nucleotides, and in maintaining the intracellular balance of A and G nucleotides. The sequence is that of GMP reductase from Lysinibacillus sphaericus (strain C3-41).